The chain runs to 229 residues: DNA polymerase III subunit epsilon (229 aa).

Positions 10 and 12 each coordinate a divalent metal cation. 4 residues coordinate substrate: Asp-10, Glu-12, Glu-55, and His-60. Residue His-156 is the Proton acceptor of the active site. Asp-161 is a binding site for a divalent metal cation. A substrate-binding site is contributed by Asp-161.

In terms of assembly, DNA polymerase III contains a core (composed of alpha, epsilon and theta chains) that associates with a tau subunit. This core dimerizes to form the POLIII' complex. PolIII' associates with the gamma complex (composed of gamma, delta, delta', psi and chi chains) and with the beta chain to form the complete DNA polymerase III complex. Requires Mg(2+) as cofactor. Mn(2+) serves as cofactor.

The catalysed reaction is DNA(n) + a 2'-deoxyribonucleoside 5'-triphosphate = DNA(n+1) + diphosphate. Its function is as follows. DNA polymerase III is a complex, multichain enzyme responsible for most of the replicative synthesis in bacteria. The epsilon subunit contain the editing function and is a proofreading 3'-5' exonuclease. The chain is DNA polymerase III subunit epsilon (dnaQ) from Rickettsia typhi (strain ATCC VR-144 / Wilmington).